The sequence spans 316 residues: N-acetyl-gamma-glutamyl-phosphate reductase (316 aa).

C136 is a catalytic residue.

It belongs to the NAGSA dehydrogenase family. Type 1 subfamily.

The protein resides in the cytoplasm. It carries out the reaction N-acetyl-L-glutamate 5-semialdehyde + phosphate + NADP(+) = N-acetyl-L-glutamyl 5-phosphate + NADPH + H(+). Its pathway is amino-acid biosynthesis; L-arginine biosynthesis; N(2)-acetyl-L-ornithine from L-glutamate: step 3/4. In terms of biological role, catalyzes the NADPH-dependent reduction of N-acetyl-5-glutamyl phosphate to yield N-acetyl-L-glutamate 5-semialdehyde. In Xanthomonas euvesicatoria pv. vesicatoria (strain 85-10) (Xanthomonas campestris pv. vesicatoria), this protein is N-acetyl-gamma-glutamyl-phosphate reductase.